The sequence spans 93 residues: C-C motif chemokine 14 (93 aa).

Positions 1–19 (MKISVAAIPFFLLITIALG) are cleaved as a signal peptide. Ser-26 carries O-linked (GalNAc...) serine; partial glycosylation. Disulfide bonds link Cys-35/Cys-59 and Cys-36/Cys-75.

Belongs to the intercrine beta (chemokine CC) family. Post-translationally, the N-terminal processed forms HCC-1(3-74), HCC-1(4-74) and HCC-1(9-74) are produced in small amounts by proteolytic cleavage after secretion in blood. In terms of processing, HCC-1(1-74), but not HCC-1(3-74) and HCC-1(4-74), is partially O-glycosylated; the O-linked glycan consists of one Gal-GalNAc disaccharide, further modified by two N-acetylneuraminic acids. As to expression, expressed constitutively in several normal tissues: spleen, liver, skeletal and heart muscle, gut, and bone marrow, present at high concentrations (1-80 nM) in plasma.

Its subcellular location is the secreted. Has weak activities on human monocytes and acts via receptors that also recognize MIP-1 alpha. It induces intracellular Ca(2+) changes and enzyme release, but no chemotaxis, at concentrations of 100-1,000 nM, and is inactive on T-lymphocytes, neutrophils, and eosinophil leukocytes. Enhances the proliferation of CD34 myeloid progenitor cells. The processed form HCC-1(9-74) is a chemotactic factor that attracts monocytes, eosinophils, and T-cells and is a ligand for CCR1, CCR3 and CCR5. This chain is C-C motif chemokine 14 (CCL14), found in Homo sapiens (Human).